A 333-amino-acid chain; its full sequence is Autoinducer 2 import system permease protein LsrD (333 aa).

10 helical membrane passes run 7–27 (YGWE…FGIA), 45–65 (ICIG…GIDI), 70–90 (TIGL…PMAA), 91–111 (AIPL…ALIL), 118–138 (LVIT…LSGI), 162–182 (LFGL…CWLF), 212–232 (TLYL…IVLV), 240–260 (SDLG…GGAN), 261–281 (IYGG…IGYL), and 288–308 (AGVP…IAVV).

This sequence belongs to the binding-protein-dependent transport system permease family. AraH/RbsC subfamily. In terms of assembly, the complex is composed of two ATP-binding proteins (LsrA), two transmembrane proteins (LsrC and LsrD) and a solute-binding protein (LsrB).

It is found in the cell inner membrane. Its function is as follows. Part of the ABC transporter complex LsrABCD involved in autoinducer 2 (AI-2) import. Probably responsible for the translocation of the substrate across the membrane. In Photorhabdus laumondii subsp. laumondii (strain DSM 15139 / CIP 105565 / TT01) (Photorhabdus luminescens subsp. laumondii), this protein is Autoinducer 2 import system permease protein LsrD (lsrD).